Here is a 356-residue protein sequence, read N- to C-terminus: DNA polymerase IV (356 aa).

One can recognise a UmuC domain in the interval 1–188 (MDTSRKIIHI…IPVTKFYGVG (188 aa)). Mg(2+) contacts are provided by Asp11 and Asp106. Glu107 is an active-site residue.

Belongs to the DNA polymerase type-Y family. Monomer. Requires Mg(2+) as cofactor.

Its subcellular location is the cytoplasm. The enzyme catalyses DNA(n) + a 2'-deoxyribonucleoside 5'-triphosphate = DNA(n+1) + diphosphate. In terms of biological role, poorly processive, error-prone DNA polymerase involved in untargeted mutagenesis. Copies undamaged DNA at stalled replication forks, which arise in vivo from mismatched or misaligned primer ends. These misaligned primers can be extended by PolIV. Exhibits no 3'-5' exonuclease (proofreading) activity. May be involved in translesional synthesis, in conjunction with the beta clamp from PolIII. The protein is DNA polymerase IV of Listeria monocytogenes serovar 1/2a (strain ATCC BAA-679 / EGD-e).